The sequence spans 65 residues: MSTKLKGPDGRIPDRLPDGTPAVSWERRWTEGSLPLWLVATVGGMAVLSVLGLFFFGSFTGVGSA.

The segment covering 1-17 (MSTKLKGPDGRIPDRLP) has biased composition (basic and acidic residues). The disordered stretch occupies residues 1 to 20 (MSTKLKGPDGRIPDRLPDGT). A helical transmembrane segment spans residues 36–56 (LWLVATVGGMAVLSVLGLFFF).

Belongs to the PsbJ family. As to quaternary structure, PSII is composed of 1 copy each of membrane proteins PsbA, PsbB, PsbC, PsbD, PsbE, PsbF, PsbH, PsbI, PsbJ, PsbK, PsbL, PsbM, PsbT, PsbX, PsbY, Psb30/Ycf12, peripheral proteins PsbO, CyanoQ (PsbQ), PsbU, PsbV and a large number of cofactors. It forms dimeric complexes.

The protein localises to the cellular thylakoid membrane. Functionally, one of the components of the core complex of photosystem II (PSII). PSII is a light-driven water:plastoquinone oxidoreductase that uses light energy to abstract electrons from H(2)O, generating O(2) and a proton gradient subsequently used for ATP formation. It consists of a core antenna complex that captures photons, and an electron transfer chain that converts photonic excitation into a charge separation. In Prochlorococcus marinus (strain MIT 9303), this protein is Photosystem II reaction center protein J.